The chain runs to 76 residues: Serine palmitoyltransferase small subunit B (76 aa).

Residues 1–11 (MDFKRVKDYLS) are Cytoplasmic-facing. A helical membrane pass occupies residues 12 to 29 (WLYYQYQIISCCAVLEPW). Over 30–36 (EQSMFNT) the chain is Lumenal. A helical membrane pass occupies residues 37-57 (IILTIFAMVVYTAYVFIPIHI). At 58–76 (RLAWEFFSKMCGYHSTISN) the chain is on the cytoplasmic side.

Belongs to the SPTSS family. SPTSSB subfamily. Component of the serine palmitoyltransferase (SPT) complex, which is composed of SPTLC1, SPTLC2 or SPTLC3 and SPTSSA or SPTSSB. The heterodimer consisting of SPTLC1 and SPTLC2/SPTLC3 forms the catalytic core of the enzyme, while SPTSSA or SPTSSB subunits determine substrate specificity. SPT also interacts with ORMDL proteins, especially ORMDL3, which negatively regulate SPT activity in the presence of ceramides.

It is found in the endoplasmic reticulum membrane. The protein operates within lipid metabolism; sphingolipid metabolism. Functionally, component of the serine palmitoyltransferase multisubunit enzyme (SPT) that catalyzes the initial and rate-limiting step in sphingolipid biosynthesis by condensing L-serine and activated acyl-CoA (most commonly palmitoyl-CoA) to form long-chain bases. The SPT complex is composed of SPTLC1, SPTLC2 or SPTLC3 and SPTSSA or SPTSSB. Within this complex, the heterodimer consisting of SPTLC1 and SPTLC2/SPTLC3 forms the catalytic core. Within the SPT complex, SPTSSB stimulates the catalytic activity and plays a role in substrate specificity. SPT complexes with this subunit showing a preference for longer acyl-CoAs. The SPTLC1-SPTLC2-SPTSSB complex shows a strong preference for C18-CoA substrate, while the SPTLC1-SPTLC3-SPTSSB isozyme displays an ability to use a broader range of acyl-CoAs, without apparent preference. This is Serine palmitoyltransferase small subunit B (SPTSSB) from Bos taurus (Bovine).